Here is a 446-residue protein sequence, read N- to C-terminus: UDP-N-acetylmuramoylalanine--D-glutamate ligase (446 aa).

Residue 118-124 coordinates ATP; the sequence is GSNGKST.

Belongs to the MurCDEF family.

The protein resides in the cytoplasm. The enzyme catalyses UDP-N-acetyl-alpha-D-muramoyl-L-alanine + D-glutamate + ATP = UDP-N-acetyl-alpha-D-muramoyl-L-alanyl-D-glutamate + ADP + phosphate + H(+). Its pathway is cell wall biogenesis; peptidoglycan biosynthesis. Cell wall formation. Catalyzes the addition of glutamate to the nucleotide precursor UDP-N-acetylmuramoyl-L-alanine (UMA). This Pseudoalteromonas translucida (strain TAC 125) protein is UDP-N-acetylmuramoylalanine--D-glutamate ligase.